Here is a 536-residue protein sequence, read N- to C-terminus: Caspase recruitment domain-containing protein 9 (536 aa).

Phosphoserine is present on serine 2. Zn(2+) is bound by residues aspartate 3, cysteine 10, and histidine 73. In terms of domain architecture, CARD spans asparagine 6–glutamate 98. The tract at residues proline 99–threonine 116 is linker. Coiled-coil stretches lie at residues glutamine 117–serine 277 and serine 303–methionine 420. Lysine 125 participates in a covalent cross-link: Glycyl lysine isopeptide (Lys-Gly) (interchain with G-Cter in ubiquitin). Position 231 is a phosphothreonine (threonine 231). Position 277 is a phosphoserine (serine 277). 7 positions are modified to phosphoserine: serine 424, serine 425, serine 431, serine 451, serine 461, serine 483, and serine 498. A disordered region spans residues serine 425–serine 451. The interval lysine 472 to serine 536 is disordered. Basic and acidic residues predominate over residues proline 487 to tyrosine 502. Residues threonine 531 and threonine 533 each carry the phosphothreonine; by CK2 modification.

Monomer. Homodimer; homodimerization is mediated by the CARD domain which forms an extensive interaction with the adjacent linker and coiled-coil regions; leads to an autoinhibited state. Homomultimer; polymerizes following activation, forming a nucleating helical template that seeds BCL10-filament formation via a CARD-CARD interaction. Interacts (via CARD domain) with BCL10 (via CARD domain); interaction takes place following CARD9 activation and polymerization, leading to the formation of a filamentous CBM complex assembly. Component of a CBM complex (CARD9-BCL10, MALT1), composed of CARD9, BCL10 and MALT1. Interacts with RASGRF1. Interacts with NOD2 (via NACHT domain); interaction is direct. Interacts with RIPK2. Interacts with VHL; without leading to protein degradation. In terms of processing, phosphorylated at Thr-231 by PRKCD downstream of C-type lectin receptors activation: phosphorylation promotes interaction with BCL10, followed by activation of NF-kappa-B and MAP kinase p38 pathways. Phosphorylated at Thr-531 and Thr-533 by CK2 following interaction with VHL, leading to inhibit the ability to activate NF-kappa-B. Ubiquitinated at Lys-125 via 'Lys-27'-linked ubiquitin by TRIM62 downstream of C-type lectin receptors activation; leading to CARD9 activation, followed by activation of NF-kappa-B and MAP kinase p38 pathways. Deubiquitinated at Lys-125 by USP15, inhibiting CARD9.

It localises to the cytoplasm. With respect to regulation, maintained in an autoinhibited state via homodimerization in which the CARD domain forms an extensive interaction with the adjacent linker and coiled-coil regions. Activation downstream of C-type lectin receptors, by phosphorylation by PRKCD and/or ubiquitination by TRIM62, triggers disruption of the CARD domain-coiled coil interface, CARD9 homooligomerization and BCL10 recruitment, followed by activation of NF-kappa-B and MAP kinase p38 pathways. Zinc-binding inhibits activation by stabilizing the CARD ground-state conformation and restricting its capacity to form BCL10-nucleating filaments. Adapter protein that plays a key role in innate immune response against fungi by forming signaling complexes downstream of C-type lectin receptors. CARD9-mediated signals are essential for antifungal immunity against a subset of fungi from the phylum Ascomycota. Transduces signals in myeloid cells downstream of C-type lectin receptors CLEC7A (dectin-1), CLEC6A (dectin-2) and CLEC4E (Mincle), which detect pathogen-associated molecular pattern metabolites (PAMPs), such as fungal carbohydrates, and trigger CARD9 activation. Upon activation, CARD9 homooligomerizes to form a nucleating helical template that recruits BCL10 via CARD-CARD interaction, thereby promoting polymerization of BCL10 and subsequent recruitment of MALT1: this leads to activation of NF-kappa-B and MAP kinase p38 (MAPK11, MAPK12, MAPK13 and/or MAPK14) pathways which stimulate expression of genes encoding pro-inflammatory cytokines and chemokines. CARD9 signaling in antigen-presenting cells links innate sensing of fungi to the activation of adaptive immunity and provides a cytokine milieu that induces the development and subsequent of interleukin 17-producing T helper (Th17) cells. Also involved in activation of myeloid cells via classical ITAM-associated receptors and TLR: required for TLR-mediated activation of MAPK, while it is not required for TLR-induced activation of NF-kappa-B. CARD9 can also be engaged independently of BCL10: forms a complex with RASGRF1 downstream of C-type lectin receptors, which recruits and activates HRAS, leading to ERK activation and the production of cytokines. Acts as an important regulator of the intestinal commensal fungi (mycobiota) component of the gut microbiota. Plays an essential role in antifungal immunity against dissemination of gut fungi: acts by promoting induction of antifungal IgG antibodies response in CX3CR1(+) macrophages to confer protection against disseminated C.albicans or C.auris infection. Also mediates immunity against other pathogens, such as certain bacteria, viruses and parasites; CARD9 signaling is however redundant with other innate immune responses. In response to L.monocytogenes infection, required for the production of inflammatory cytokines activated by intracellular peptidoglycan: acts by connecting NOD2 recognition of peptidoglycan to downstream activation of MAP kinases (MAPK) without activating NF-kappa-B. In Rattus norvegicus (Rat), this protein is Caspase recruitment domain-containing protein 9.